A 190-amino-acid polypeptide reads, in one-letter code: Vascular endothelial growth factor A (190 aa).

An N-terminal signal peptide occupies residues 1–26 (MNFLLSWVHWSLALLLYLHHAKWSQA). 3 disulfides stabilise this stretch: Cys-51–Cys-93, Cys-82–Cys-127, and Cys-86–Cys-129. Asn-100 carries N-linked (GlcNAc...) asparagine glycosylation.

This sequence belongs to the PDGF/VEGF growth factor family. Homodimer; disulfide-linked. Also found as heterodimer with PGF. Interacts with NRP1. Interacts with BSG. Interacts with CD82; this interaction inhibits VEGFA-mediated signaling pathway.

The protein localises to the secreted. Growth factor active in angiogenesis, vasculogenesis and endothelial cell growth. Induces endothelial cell proliferation, promotes cell migration, inhibits apoptosis and induces permeabilization of blood vessels. Binds to the FLT1/VEGFR1 and KDR/VEGFR2 receptors, heparan sulfate and heparin. Binding to NRP1 receptor initiates a signaling pathway needed for motor neuron axon guidance and cell body migration, including for the caudal migration of facial motor neurons from rhombomere 4 to rhombomere 6 during embryonic development. Also binds the DEAR/FBXW7-AS1 receptor. The sequence is that of Vascular endothelial growth factor A (VEGFA) from Sus scrofa (Pig).